The primary structure comprises 69 residues: MRVLFSILGVLTLLSIVPLARSFLENQDCSKHRHCRMKCKANEYAVRYCEDWTICCRVKKKESKKKKMW.

An N-terminal signal peptide occupies residues Met1 to Ser22. 2 cysteine pairs are disulfide-bonded: Cys29-Cys56 and Cys35-Cys49.

It belongs to the beta-defensin family.

It is found in the secreted. Its function is as follows. Has bactericidal activity. The sequence is that of Beta-defensin 43 (Defb43) from Mus musculus (Mouse).